The following is a 545-amino-acid chain: Chaperonin GroEL (545 aa).

Residues 30–33 (TLGP), Lys51, 87–91 (DGTTT), Gly413, 477–479 (NAA), and Asp493 each bind ATP.

Belongs to the chaperonin (HSP60) family. In terms of assembly, forms a cylinder of 14 subunits composed of two heptameric rings stacked back-to-back. Interacts with the co-chaperonin GroES.

The protein resides in the cytoplasm. It catalyses the reaction ATP + H2O + a folded polypeptide = ADP + phosphate + an unfolded polypeptide.. In terms of biological role, together with its co-chaperonin GroES, plays an essential role in assisting protein folding. The GroEL-GroES system forms a nano-cage that allows encapsulation of the non-native substrate proteins and provides a physical environment optimized to promote and accelerate protein folding. The chain is Chaperonin GroEL from Pseudomonas putida (Arthrobacter siderocapsulatus).